The chain runs to 576 residues: Proton pump-interactor 3B (576 aa).

The segment at Ser34–Gly63 is disordered. Coiled-coil stretches lie at residues Arg132 to Thr155 and Glu205 to Leu241. Residues Arg369–Ser381 show a composition bias toward basic and acidic residues. Positions Arg369–Lys395 are disordered. Residues Lys411–Ile467 adopt a coiled-coil conformation. A helical membrane pass occupies residues Trp555–Leu575.

The protein belongs to the plant Proton pump-interactor protein family.

Its subcellular location is the cell membrane. The protein resides in the endoplasmic reticulum membrane. In terms of biological role, may regulate plasma membrane ATPase activity. This Arabidopsis thaliana (Mouse-ear cress) protein is Proton pump-interactor 3B (PPI3B).